Reading from the N-terminus, the 430-residue chain is Histidine--tRNA ligase (430 aa).

It belongs to the class-II aminoacyl-tRNA synthetase family. Homodimer.

Its subcellular location is the cytoplasm. The catalysed reaction is tRNA(His) + L-histidine + ATP = L-histidyl-tRNA(His) + AMP + diphosphate + H(+). The chain is Histidine--tRNA ligase from Chlamydia abortus (strain DSM 27085 / S26/3) (Chlamydophila abortus).